A 391-amino-acid polypeptide reads, in one-letter code: Large ribosomal subunit protein uL3 (391 aa).

The span at 1 to 10 (MSHRKFEAPR) shows a compositional bias: basic and acidic residues. The disordered stretch occupies residues 1-41 (MSHRKFEAPRHGSLGFRPRRRTRHHRGRCRSFPKDDPSKKP). Basic residues predominate over residues 17 to 31 (RPRRRTRHHRGRCRS).

It belongs to the universal ribosomal protein uL3 family.

It localises to the cytoplasm. The L3 protein is a component of the large subunit of cytoplasmic ribosomes. The chain is Large ribosomal subunit protein uL3 (RPL3) from Tetrahymena thermophila.